We begin with the raw amino-acid sequence, 327 residues long: Selenate reductase subunit beta (327 aa).

4Fe-4S ferredoxin-type domains lie at 6 to 35 (LAYV…RDGR), 124 to 155 (NHYF…KREE), and 157 to 186 (GLVV…FNLQ). Residues cysteine 15, cysteine 18, cysteine 21, cysteine 25, cysteine 133, cysteine 136, and cysteine 141 each coordinate [4Fe-4S] cluster. The [3Fe-4S] cluster site is built by cysteine 145, cysteine 166, and cysteine 172. The [4Fe-4S] cluster site is built by cysteine 176, cysteine 193, cysteine 196, cysteine 208, and cysteine 212.

In terms of assembly, heterotrimer of alpha (SerA), beta (SerB) and gamma (SerC) subunits. It depends on [3Fe-4S] cluster as a cofactor. [4Fe-4S] cluster is required as a cofactor.

Its subcellular location is the periplasm. It catalyses the reaction selenite + 2 Fe(III)-[cytochrome c] + H2O = 2 Fe(II)-[cytochrome] + selenate + 2 H(+). With respect to regulation, enzyme isolated from cells grown in a tungstate rich environment shows a 20-fold reduction in selenate reductase activity. In terms of biological role, component of the selenate reductase, which catalyzes the reduction of selenate to selenite and allows anaerobic growth with selenate as the sole terminal electron acceptor. A c-type di-heme cytochrome of the cytc4 family was shown to donate electrons to the selenate reductase in vitro. SerABC can also use reduced benzyl viologen or reduced methyl viologen as an electron donor. This subunit transfers electrons from SerC to SerA. The reductase is specific for selenate, and cannot reduce nitrate, nitrite, chlorate or sulfate. The protein is Selenate reductase subunit beta of Thauera selenatis.